We begin with the raw amino-acid sequence, 240 residues long: UDP-2,3-diacylglucosamine hydrolase (240 aa).

Positions 8, 10, 41, 78, and 113 each coordinate Mn(2+). 78–79 (NR) contacts substrate. Asp121, Ser159, Asn163, Lys166, and His194 together coordinate substrate. The Mn(2+) site is built by His194 and His196.

It belongs to the LpxH family. The cofactor is Mn(2+).

It localises to the cell inner membrane. It catalyses the reaction UDP-2-N,3-O-bis[(3R)-3-hydroxytetradecanoyl]-alpha-D-glucosamine + H2O = 2-N,3-O-bis[(3R)-3-hydroxytetradecanoyl]-alpha-D-glucosaminyl 1-phosphate + UMP + 2 H(+). It participates in glycolipid biosynthesis; lipid IV(A) biosynthesis; lipid IV(A) from (3R)-3-hydroxytetradecanoyl-[acyl-carrier-protein] and UDP-N-acetyl-alpha-D-glucosamine: step 4/6. In terms of biological role, hydrolyzes the pyrophosphate bond of UDP-2,3-diacylglucosamine to yield 2,3-diacylglucosamine 1-phosphate (lipid X) and UMP by catalyzing the attack of water at the alpha-P atom. Involved in the biosynthesis of lipid A, a phosphorylated glycolipid that anchors the lipopolysaccharide to the outer membrane of the cell. This is UDP-2,3-diacylglucosamine hydrolase from Shewanella baltica (strain OS185).